We begin with the raw amino-acid sequence, 186 residues long: UPF0303 protein ZMO1353 (186 aa).

This sequence belongs to the UPF0303 family.

The chain is UPF0303 protein ZMO1353 from Zymomonas mobilis subsp. mobilis (strain ATCC 31821 / ZM4 / CP4).